Consider the following 554-residue polypeptide: Chaperonin GroEL (554 aa).

ATP-binding positions include 30-33 (TLGP), lysine 51, 87-91 (DGTTT), glycine 415, 478-480 (DAA), and aspartate 494.

It belongs to the chaperonin (HSP60) family. In terms of assembly, forms a cylinder of 14 subunits composed of two heptameric rings stacked back-to-back. Interacts with the co-chaperonin GroES.

Its subcellular location is the cytoplasm. The catalysed reaction is ATP + H2O + a folded polypeptide = ADP + phosphate + an unfolded polypeptide.. Its function is as follows. Together with its co-chaperonin GroES, plays an essential role in assisting protein folding. The GroEL-GroES system forms a nano-cage that allows encapsulation of the non-native substrate proteins and provides a physical environment optimized to promote and accelerate protein folding. This Pelobacter propionicus (strain DSM 2379 / NBRC 103807 / OttBd1) protein is Chaperonin GroEL.